A 430-amino-acid polypeptide reads, in one-letter code: Gamma-glutamyl phosphate reductase (430 aa).

Belongs to the gamma-glutamyl phosphate reductase family.

The protein localises to the cytoplasm. The enzyme catalyses L-glutamate 5-semialdehyde + phosphate + NADP(+) = L-glutamyl 5-phosphate + NADPH + H(+). The protein operates within amino-acid biosynthesis; L-proline biosynthesis; L-glutamate 5-semialdehyde from L-glutamate: step 2/2. Functionally, catalyzes the NADPH-dependent reduction of L-glutamate 5-phosphate into L-glutamate 5-semialdehyde and phosphate. The product spontaneously undergoes cyclization to form 1-pyrroline-5-carboxylate. The sequence is that of Gamma-glutamyl phosphate reductase from Polaromonas naphthalenivorans (strain CJ2).